A 215-amino-acid chain; its full sequence is Ribonuclease T (215 aa).

Residues 20 to 194 enclose the Exonuclease domain; sequence VVIDVETAGF…YDTERTAVLF (175 aa). Positions 23, 25, 181, and 186 each coordinate Mg(2+). His181 functions as the Proton donor/acceptor in the catalytic mechanism.

It belongs to the RNase T family. As to quaternary structure, homodimer. Mg(2+) serves as cofactor.

Functionally, trims short 3' overhangs of a variety of RNA species, leaving a one or two nucleotide 3' overhang. Responsible for the end-turnover of tRNA: specifically removes the terminal AMP residue from uncharged tRNA (tRNA-C-C-A). Also appears to be involved in tRNA biosynthesis, especially in strains lacking other exoribonucleases. A general regulator of small RNAs (sRNA), contributes to their degradation. Upon overexpression suppresses sRNA-mediated RhyB-silencing of multiple RNA targets; overexpression leads to nearly complete loss of RhyB sRNA. This Escherichia coli (strain K12) protein is Ribonuclease T.